A 549-amino-acid chain; its full sequence is Hydroxylamine reductase (549 aa).

[4Fe-4S] cluster-binding residues include Cys-5, Cys-8, Cys-17, and Cys-23. Hybrid [4Fe-2O-2S] cluster is bound by residues His-244, Glu-268, Cys-312, Cys-403, Cys-431, Cys-456, Glu-491, and Lys-493. Residue Cys-403 is modified to Cysteine persulfide.

The protein belongs to the HCP family. [4Fe-4S] cluster serves as cofactor. Hybrid [4Fe-2O-2S] cluster is required as a cofactor.

Its subcellular location is the cytoplasm. It carries out the reaction A + NH4(+) + H2O = hydroxylamine + AH2 + H(+). Functionally, catalyzes the reduction of hydroxylamine to form NH(3) and H(2)O. In Caldanaerobacter subterraneus subsp. tengcongensis (strain DSM 15242 / JCM 11007 / NBRC 100824 / MB4) (Thermoanaerobacter tengcongensis), this protein is Hydroxylamine reductase.